Reading from the N-terminus, the 282-residue chain is Anamorsin homolog (282 aa).

The segment at 5-151 (VDTNNFVLLL…EVGAKTALSL (147 aa)) is N-terminal SAM-like domain. The interval 152–196 (SFAPKPAQPKAETSAAQIWTLSAQDIDDEDVDLLDSDTLLDEDDL) is linker. Positions 208, 218, 221, and 223 each coordinate [2Fe-2S] cluster. The segment at 208–223 (CGPGSGKKKACKNCTC) is fe-S binding site A. Residues Cys243, Cys246, Cys254, and Cys257 each coordinate [4Fe-4S] cluster. 2 consecutive short sequence motifs (cx2C motif) follow at residues 243–246 (CGSC) and 254–257 (CSTC). The segment at 243–257 (CGSCYLGDAFRCSTC) is fe-S binding site B.

Belongs to the anamorsin family. In terms of assembly, monomer. The cofactor is [2Fe-2S] cluster. [4Fe-4S] cluster is required as a cofactor.

It is found in the cytoplasm. Its subcellular location is the mitochondrion intermembrane space. Component of the cytosolic iron-sulfur (Fe-S) protein assembly (CIA) machinery. Required for the maturation of extramitochondrial Fe-S proteins. Part of an electron transfer chain functioning in an early step of cytosolic Fe-S biogenesis, facilitating the de novo assembly of a [4Fe-4S] cluster on the cytosolic Fe-S scaffold complex. Electrons are transferred from NADPH via a FAD- and FMN-containing diflavin oxidoreductase. Together with the diflavin oxidoreductase, also required for the assembly of the diferric tyrosyl radical cofactor of ribonucleotide reductase (RNR), probably by providing electrons for reduction during radical cofactor maturation in the catalytic small subunit. The sequence is that of Anamorsin homolog from Nematostella vectensis (Starlet sea anemone).